A 147-amino-acid polypeptide reads, in one-letter code: Small ribosomal subunit protein bS6 (147 aa).

Positions 107–147 are disordered; sequence KEGRERKARPARAERRDDTEAEDLSDEEGVEAEDFEEEQGV. Over residues 125-147 the composition is skewed to acidic residues; sequence TEAEDLSDEEGVEAEDFEEEQGV.

Belongs to the bacterial ribosomal protein bS6 family.

Its function is as follows. Binds together with bS18 to 16S ribosomal RNA. The sequence is that of Small ribosomal subunit protein bS6 from Cellvibrio japonicus (strain Ueda107) (Pseudomonas fluorescens subsp. cellulosa).